The following is a 118-amino-acid chain: Pterin-4-alpha-carbinolamine dehydratase (118 aa).

It belongs to the pterin-4-alpha-carbinolamine dehydratase family.

It carries out the reaction (4aS,6R)-4a-hydroxy-L-erythro-5,6,7,8-tetrahydrobiopterin = (6R)-L-erythro-6,7-dihydrobiopterin + H2O. Involved in tetrahydrobiopterin biosynthesis. Seems to both prevent the formation of 7-pterins and accelerate the formation of quinonoid-BH2. May also have a positive regulatory role in the expression of phhA. This chain is Pterin-4-alpha-carbinolamine dehydratase (phhB), found in Pseudomonas syringae pv. tomato (strain ATCC BAA-871 / DC3000).